The following is a 399-amino-acid chain: Nicotinate phosphoribosyltransferase (399 aa).

His224 is modified (phosphohistidine; by autocatalysis).

It belongs to the NAPRTase family. Transiently phosphorylated on a His residue during the reaction cycle. Phosphorylation strongly increases the affinity for substrates and increases the rate of nicotinate D-ribonucleotide production. Dephosphorylation regenerates the low-affinity form of the enzyme, leading to product release.

The enzyme catalyses nicotinate + 5-phospho-alpha-D-ribose 1-diphosphate + ATP + H2O = nicotinate beta-D-ribonucleotide + ADP + phosphate + diphosphate. The protein operates within cofactor biosynthesis; NAD(+) biosynthesis; nicotinate D-ribonucleotide from nicotinate: step 1/1. Its function is as follows. Catalyzes the synthesis of beta-nicotinate D-ribonucleotide from nicotinate and 5-phospho-D-ribose 1-phosphate at the expense of ATP. In Ectopseudomonas mendocina (strain ymp) (Pseudomonas mendocina), this protein is Nicotinate phosphoribosyltransferase.